The following is a 193-amino-acid chain: Penicillin-binding protein activator LpoB (193 aa).

A signal peptide spans 1–16 (MKKYLGVILAALVLTG). A lipid anchor (N-palmitoyl cysteine) is attached at Cys-17. Cys-17 carries the S-diacylglycerol cysteine lipid modification. The disordered stretch occupies residues 17-55 (CPSRPPEPTEPPATIEPVEPQVPTTPTLPPGESVPQPPK). The segment covering 28–41 (PATIEPVEPQVPTT) has biased composition (low complexity).

This sequence belongs to the LpoB family. In terms of assembly, interacts with PBP1b.

The protein resides in the cell outer membrane. Regulator of peptidoglycan synthesis that is essential for the function of penicillin-binding protein 1B (PBP1b). This Pectobacterium carotovorum subsp. carotovorum (strain PC1) protein is Penicillin-binding protein activator LpoB.